The sequence spans 419 residues: Voltage-gated potassium channel subunit beta-1 (419 aa).

Residues 1 to 51 form a disordered region; sequence MLAARTGAAGSQIAEESSKLRKQAAFSGGSKDRSPKKASENVKDSSLSPSG. Basic and acidic residues predominate over residues 30-43; that stretch reads SKDRSPKKASENVK. T108, W109, Q115, and D137 together coordinate NADP(+). Y142 functions as the Proton donor/acceptor in the catalytic mechanism. Positions 210, 240, 241, 266, 295, 296, 297, 298, 299, 300, 306, 316, 375, 377, 381, 384, and 385 each coordinate NADP(+).

The protein belongs to the shaker potassium channel beta subunit family. In terms of assembly, homotetramer. Interaction with tetrameric potassium channel alpha subunits gives rise to a heterooctamer. Identified in potassium channel complexes containing KCNA1, KCNA2, KCNA4, KCNA5, KCNA6, KCNAB1 and KCNAB2. Part of a complex containing KCNA1, KCNA4 and LGI1; interaction with LGI1 inhibits down-regulation of KCNA1 channel activity. Interacts with the dimer formed by GNB1 and GNG2; this enhances KCNA1 binding. Interacts with SQSTM1. Detected in portal vein myocytes (at protein level).

It localises to the cytoplasm. The protein localises to the membrane. Its subcellular location is the cell membrane. It catalyses the reaction a primary alcohol + NADP(+) = an aldehyde + NADPH + H(+). It carries out the reaction a secondary alcohol + NADP(+) = a ketone + NADPH + H(+). Its function is as follows. Regulatory subunit of the voltage-gated potassium (Kv) channels composed of pore-forming and potassium-conducting alpha subunits and of regulatory beta subunits. The beta-1/KCNAB1 cytoplasmic subunit mediates closure of delayed rectifier potassium channels by physically obstructing the pore via its N-terminal domain and increases the speed of channel closure for other family members. Promotes the inactivation of KCNA1, KCNA2, KCNA4, KCNA5 and KCNA6 alpha subunit-containing channels. Displays nicotinamide adenine dinucleotide phosphate (NADPH)-dependent aldoketoreductase activity by catalyzing the NADPH-dependent reduction of a variety of endogenous aldehydes and ketones. The binding of NADPH is required for efficient down-regulation of potassium channel activity. Oxidation of the bound NADPH restrains N-terminal domain from blocking the channel, thereby decreasing N-type inactivation of potassium channel activity. The polypeptide is Voltage-gated potassium channel subunit beta-1 (KCNAB1) (Oryctolagus cuniculus (Rabbit)).